The chain runs to 404 residues: Alanine racemase (404 aa).

Lys-34 (proton acceptor; specific for D-alanine) is an active-site residue. Position 34 is an N6-(pyridoxal phosphate)lysine (Lys-34). Arg-133 is a binding site for substrate. Residues Glu-226–Arg-273 enclose the RPE1 insert domain. The active-site Proton acceptor; specific for L-alanine is Tyr-298. Residue Met-346 participates in substrate binding.

Belongs to the alanine racemase family. Pyridoxal 5'-phosphate is required as a cofactor.

The enzyme catalyses L-alanine = D-alanine. Its pathway is amino-acid biosynthesis; D-alanine biosynthesis; D-alanine from L-alanine: step 1/1. In terms of biological role, catalyzes the interconversion of L-alanine and D-alanine. May also act on other amino acids. The polypeptide is Alanine racemase (alr) (Rickettsia prowazekii (strain Madrid E)).